The primary structure comprises 443 residues: Amino-acid acetyltransferase (443 aa).

In terms of domain architecture, N-acetyltransferase spans 296-443 (EQIRRATIND…RSKVLMADLG (148 aa)).

Belongs to the acetyltransferase family. ArgA subfamily. In terms of assembly, homohexamer.

The protein resides in the cytoplasm. The enzyme catalyses L-glutamate + acetyl-CoA = N-acetyl-L-glutamate + CoA + H(+). Its pathway is amino-acid biosynthesis; L-arginine biosynthesis; N(2)-acetyl-L-ornithine from L-glutamate: step 1/4. The sequence is that of Amino-acid acetyltransferase (argA) from Salmonella typhi.